A 358-amino-acid polypeptide reads, in one-letter code: Magnesium-protoporphyrin IX monomethyl ester [oxidative] cyclase 1 (358 aa).

The protein belongs to the AcsF family. The cofactor is Fe cation.

The enzyme catalyses Mg-protoporphyrin IX 13-monomethyl ester + 3 NADPH + 3 O2 + 2 H(+) = 3,8-divinyl protochlorophyllide a + 3 NADP(+) + 5 H2O. It participates in porphyrin-containing compound metabolism; chlorophyll biosynthesis (light-independent). In terms of biological role, catalyzes the formation of the isocyclic ring in chlorophyll biosynthesis. Mediates the cyclase reaction, which results in the formation of divinylprotochlorophyllide (Pchlide) characteristic of all chlorophylls from magnesium-protoporphyrin IX 13-monomethyl ester (MgPMME). In Synechocystis sp. (strain ATCC 27184 / PCC 6803 / Kazusa), this protein is Magnesium-protoporphyrin IX monomethyl ester [oxidative] cyclase 1.